Here is a 623-residue protein sequence, read N- to C-terminus: Regulatory solute carrier protein family 1 member 1 (623 aa).

3 stretches are compositionally biased toward polar residues: residues 1–16 (MSSL…QAHP), 83–99 (CASS…PAIP), and 133–144 (EASLSVTTTRMQ). 4 disordered regions span residues 1–48 (MSSL…PDSI), 71–99 (RKEQ…PAIP), 116–189 (SAEG…APHD), and 433–493 (EELT…PHCT). Composition is skewed to basic and acidic residues over residues 150-159 (IGEKGWHPEY), 170-180 (QHEEPRNEQHE), and 460-473 (LVDK…RESV). Residues 474-491 (NESSLVTLDSAKTSNQPH) are compositionally biased toward polar residues. Residues 577–617 (IFPAADIDRILRAGFTLQEALGALHRVGGNADLALLVLLAK) form the UBA domain.

As to quaternary structure, interacts with YRDC. Renal outer cortex and outer medulla, small intestine and liver.

It localises to the cell membrane. Its subcellular location is the nucleus. The protein localises to the golgi apparatus. The protein resides in the trans-Golgi network. Functionally, mediates transcriptional and post-transcriptional regulation of SLC5A1. Inhibits a dynamin and PKC-dependent exocytotic pathway of SLC5A1. Also involved in transcriptional regulation of SLC22A2. Exhibits glucose-dependent, short-term inhibition of SLC5A1 and SLC22A2 by inhibiting the release of vesicles from the trans-Golgi network. The chain is Regulatory solute carrier protein family 1 member 1 (RSC1A1) from Sus scrofa (Pig).